A 253-amino-acid polypeptide reads, in one-letter code: MTTSRCSHLPEVLPDCTGSAAPVVKTVEDCGSLVNGQPQYVMQVSAKDGQLLSTVVRTLATQSPFNDRPMCRICHEGSSQEDLLSPCECTGTLGTIHRSCLEHWLSSSNTSYCELCHFRFAVERKPRPLVEWLRNPGPQHEKRTLFGDMVCFLFITPLATISGWLCLRGAVDHLHFSSRLEAVGLIALTVALFTIYLFWTLVSFRYHCRLYNEWRRTNQRVILLIPKSVNIPSNQQSLLGLHSAKRNSKETIV.

The RING-CH-type zinc finger occupies 63 to 123; that stretch reads SPFNDRPMCR…ELCHFRFAVE (61 aa). Zn(2+) contacts are provided by Cys71, Cys74, Cys87, Cys89, His97, Cys100, Cys113, and Cys116. 2 helical membrane passes run 145-165 and 182-202; these read LFGD…SGWL and AVGL…WTLV. Ser237 and Ser243 each carry phosphoserine.

Interacts with MARCHF2 and STX6.

The protein resides in the cytoplasmic vesicle membrane. It localises to the early endosome membrane. The catalysed reaction is S-ubiquitinyl-[E2 ubiquitin-conjugating enzyme]-L-cysteine + [acceptor protein]-L-lysine = [E2 ubiquitin-conjugating enzyme]-L-cysteine + N(6)-ubiquitinyl-[acceptor protein]-L-lysine.. Its pathway is protein modification; protein ubiquitination. Its function is as follows. E3 ubiquitin-protein ligase which may be involved in endosomal trafficking. E3 ubiquitin ligases accept ubiquitin from an E2 ubiquitin-conjugating enzyme in the form of a thioester and then directly transfer the ubiquitin to targeted substrates. The protein is E3 ubiquitin-protein ligase MARCHF3 (MARCHF3) of Bos taurus (Bovine).